The sequence spans 206 residues: Ras-related protein Rab-7b (206 aa).

15–22 (GDSGVGKT) is a GTP binding site. A phosphoserine mark is found at S17 and S23. Phosphothreonine occurs at positions 34, 40, and 64. GTP is bound by residues 34–40 (TQQYRAT) and 63–67 (DTAGQ). Positions 37–45 (YRATVGADF) match the Effector region motif. The residue at position 72 (S72) is a Phosphoserine. Y78 and Y88 each carry phosphotyrosine. GTP contacts are provided by residues 125 to 128 (NKLD) and 157 to 158 (AK). 2 S-geranylgeranyl cysteine lipidation sites follow: C205 and C206.

Belongs to the small GTPase superfamily. Rab family. Glycosylated.

It localises to the cytoplasm. The protein localises to the cytoskeleton. The polypeptide is Ras-related protein Rab-7b (Paramecium octaurelia).